The sequence spans 159 residues: Putative 2'-deoxynucleoside 5'-phosphate N-hydrolase 1 (159 aa).

Substrate-binding positions include 25–31, tyrosine 40, histidine 58, glutamate 104, and 126–128; these read FLSGSIR and SAM.

This sequence belongs to the 2'-deoxynucleoside 5'-phosphate N-hydrolase 1 family. Monomer and homodimer.

The enzyme catalyses a pyrimidine 2'-deoxyribonucleoside 5'-phosphate + H2O = a pyrimidine nucleobase + 2-deoxy-D-ribose 5-phosphate. It catalyses the reaction a purine 2'-deoxyribonucleoside 5'-phosphate + H2O = a purine nucleobase + 2-deoxy-D-ribose 5-phosphate. Catalyzes the cleavage of the N-glycosidic bond of deoxyribonucleoside 5'-monophosphates to yield deoxyribose 5-phosphate and a purine or pyrimidine base. The polypeptide is Putative 2'-deoxynucleoside 5'-phosphate N-hydrolase 1 (Methanosarcina barkeri (strain Fusaro / DSM 804)).